The sequence spans 303 residues: E3 ubiquitin-protein ligase CHIP (303 aa).

Residues M1 to G10 are compositionally biased toward basic and acidic residues. The tract at residues M1–K30 is disordered. K2 is covalently cross-linked (Glycyl lysine isopeptide (Lys-Gly) (interchain with G-Cter in ubiquitin)). The residue at position 19 (S19) is a Phosphoserine. A Glycyl lysine isopeptide (Lys-Gly) (interchain with G-Cter in ubiquitin) cross-link involves residue K22. S23 and S25 each carry phosphoserine. 3 TPR repeats span residues A26–V59, A60–S93, and K95–Q127. The segment at G101–I200 is required for interaction with MAPK7. The required for interaction with and ubiquitination of MYOCD stretch occupies residues A142 to Q196. Residues K143–Q197 form a required for interaction with FOXO1 region. Residues K143–Y303 are required for ubiquitination of FOXO1. S149 carries the phosphoserine modification. Glycyl lysine isopeptide (Lys-Gly) (interchain with G-Cter in ubiquitin) cross-links involve residues K221 and K255. One can recognise a U-box domain in the interval D226–V300. Phosphoserine is present on S273.

In terms of assembly, homodimer. Interacts with BAG2. Interacts with E2 ubiquitin conjugating enzymes UBE2D1, UBE2D2 and UBE2D3. Detected in a ternary complex containing STUB1, HSPA1A and HSPBP1. Part of a complex composed of STUB1/CHIP, VCP/p97, CHRNA3, and UBXN2A that modulates the ubiquitination and endoplasmic reticulum-associated degradation (ERAD) of CHRNA3. Within the complex UBXN2A acts as a scaffold protein required for the interaction of CHRNA3 with VCP/p97, this interaction also inhibits CHRNA3 ubiquitination by STUB1/CHIP and subsequently ERAD. Interacts with MKKS. Interacts with DNAAF4. Interacts (when monoubiquitinated) with ATXN3. Interacts with UBE2W. Interacts (via the U-box domain) with the UBE2V2-UBE2N heterodimer; the complex has a specific 'Lys-63'-linked polyubiquitination activity. Interacts with DNAJB6. Interacts with FLCN. Interacts with HSP90AA1. Interacts with HSP90. Interacts with UBE2N and UBE2V1. Interacts (via TPR repeats) with HSPA8 (via C-terminus). Interacts (via TPR repeats) with HSPA1A (via C-terminus). Interacts with the non-acetylated form of HSPA1A and HSPA1B. Interacts with SMAD3 and HSP90AB1. Interacts with UBE4B. Interacts with PRMT5. Interacts with MYOCD (via C-terminus). Interacts with FOXO1 (when phosphorylated on 'Ser-256'). Interacts with MAPK7/ERK5; the interaction is enhanced in the presence of IGF1 or MAP2K5 and promotes STUB1/CHIP E3 ligase activity. Interacts with and ubiquitinates ESR1; the interaction is promoted in the absence of estradiol (17-beta-estradiol/E2). Interacts with ESR2. Interacts with and ubiquitinates NFATC3; HSPA1A/HSP70 is required as a co-chaperone. In macrophages, interacts with PAQR3; the interaction promotes PPARG poylubiquitination and STUB1-mediated degradation. Component of the chaperone-assisted selective autophagy (CASA) complex consisting of BAG3, HSPA8/HSC70, HSPB8 and STUB1/CHIP. Post-translationally, monoubiquitinated at Lys-2 following cell stress by UBE2W, promoting the interaction with ATXN3. Auto-ubiquitinated; mediated by UBE2D1 and UBE2D2 and enhanced in the presence of MAP2K5. In terms of tissue distribution, expressed in differentiated myotubes (at protein level). Highly expressed in skeletal muscle, heart, pancreas, brain and placenta. Detected in kidney, liver and lung.

The protein resides in the cytoplasm. It is found in the nucleus. Its subcellular location is the mitochondrion. It catalyses the reaction S-ubiquitinyl-[E2 ubiquitin-conjugating enzyme]-L-cysteine + [acceptor protein]-L-lysine = [E2 ubiquitin-conjugating enzyme]-L-cysteine + N(6)-ubiquitinyl-[acceptor protein]-L-lysine.. The protein operates within protein modification; protein ubiquitination. E3 ubiquitin-protein ligase which targets misfolded chaperone substrates towards proteasomal degradation. Plays a role in the maintenance of mitochondrial morphology and promotes mitophagic removal of dysfunctional mitochondria; thereby acts as a protector against apoptosis in response to cellular stress. Negatively regulates vascular smooth muscle contraction, via degradation of the transcriptional activator MYOCD and subsequent loss of transcription of genes involved in vascular smooth muscle contraction. Promotes survival and proliferation of cardiac smooth muscle cells via ubiquitination and degradation of FOXO1, resulting in subsequent repression of FOXO1-mediated transcription of pro-apoptotic genes. Ubiquitinates ICER-type isoforms of CREM and targets them for proteasomal degradation, thereby acts as a positive effector of MAPK/ERK-mediated inhibition of apoptosis in cardiomyocytes. Inhibits lipopolysaccharide-induced apoptosis and hypertrophy in cardiomyocytes, via ubiquitination and subsequent proteasomal degradation of NFATC3. Collaborates with ATXN3 in the degradation of misfolded chaperone substrates: ATXN3 restricting the length of ubiquitin chain attached to STUB1/CHIP substrates and preventing further chain extension. Ubiquitinates NOS1 in concert with Hsp70 and Hsp40. Modulates the activity of several chaperone complexes, including Hsp70, Hsc70 and Hsp90. Ubiquitinates CHRNA3 targeting it for endoplasmic reticulum-associated degradation in cortical neurons, as part of the STUB1-VCP-UBXN2A complex. Ubiquitinates and promotes ESR1 proteasomal degradation in response to age-related circulating estradiol (17-beta-estradiol/E2) decline, thereby promotes neuronal apoptosis in response to ischemic reperfusion injury. Mediates transfer of non-canonical short ubiquitin chains to HSPA8 that have no effect on HSPA8 degradation. Mediates polyubiquitination of DNA polymerase beta (POLB) at 'Lys-41', 'Lys-61' and 'Lys-81', thereby playing a role in base-excision repair: catalyzes polyubiquitination by amplifying the HUWE1/ARF-BP1-dependent monoubiquitination and leading to POLB-degradation by the proteasome. Mediates polyubiquitination of CYP3A4. Ubiquitinates EPHA2 and may regulate the receptor stability and activity through proteasomal degradation. Acts as a co-chaperone for HSPA1A and HSPA1B chaperone proteins and promotes ubiquitin-mediated protein degradation. Negatively regulates the suppressive function of regulatory T-cells (Treg) during inflammation by mediating the ubiquitination and degradation of FOXP3 in a HSPA1A/B-dependent manner. Catalyzes monoubiquitination of SIRT6, preventing its degradation by the proteasome. Likely mediates polyubiquitination and down-regulates plasma membrane expression of PD-L1/CD274, an immune inhibitory ligand critical for immune tolerance to self and antitumor immunity. Negatively regulates TGF-beta signaling by modulating the basal level of SMAD3 via ubiquitin-mediated degradation. Plays a role in the degradation of TP53. Mediates ubiquitination of RIPK3 leading to its subsequent proteasome-dependent degradation. May regulate myosin assembly in striated muscles together with UBE4B and VCP/p97 by targeting myosin chaperone UNC45B for proteasomal degradation. Ubiquitinates PPARG in macrophages playing a role in M2 macrophages polarization and angiogenesis. The polypeptide is E3 ubiquitin-protein ligase CHIP (Homo sapiens (Human)).